The chain runs to 65 residues: Toxin CsEM1 (65 aa).

The LCN-type CS-alpha/beta domain maps to 1 to 65 (KEGYLVNSYT…VWPLPNKTCN (65 aa)). 4 disulfide bridges follow: Cys-12-Cys-64, Cys-16-Cys-40, Cys-25-Cys-45, and Cys-29-Cys-47.

The protein belongs to the long (4 C-C) scorpion toxin superfamily. Sodium channel inhibitor family. Beta subfamily. As to expression, expressed by the venom gland.

It localises to the secreted. Its function is as follows. Beta toxins bind voltage-independently at site-4 of sodium channels (Nav) and shift the voltage of activation toward more negative potentials thereby affecting sodium channel activation and promoting spontaneous and repetitive firing. Highly potent. The chain is Toxin CsEM1 from Centruroides sculpturatus (Arizona bark scorpion).